The following is a 244-amino-acid chain: 1-(5-phosphoribosyl)-5-[(5-phosphoribosylamino)methylideneamino] imidazole-4-carboxamide isomerase (244 aa).

The active-site Proton acceptor is Asp8. Asp129 (proton donor) is an active-site residue.

This sequence belongs to the HisA/HisF family.

The protein resides in the cytoplasm. The catalysed reaction is 1-(5-phospho-beta-D-ribosyl)-5-[(5-phospho-beta-D-ribosylamino)methylideneamino]imidazole-4-carboxamide = 5-[(5-phospho-1-deoxy-D-ribulos-1-ylimino)methylamino]-1-(5-phospho-beta-D-ribosyl)imidazole-4-carboxamide. It participates in amino-acid biosynthesis; L-histidine biosynthesis; L-histidine from 5-phospho-alpha-D-ribose 1-diphosphate: step 4/9. This is 1-(5-phosphoribosyl)-5-[(5-phosphoribosylamino)methylideneamino] imidazole-4-carboxamide isomerase from Chelativorans sp. (strain BNC1).